A 248-amino-acid polypeptide reads, in one-letter code: Acetylglutamate kinase (248 aa).

Substrate contacts are provided by residues 41–42 (GG), Arg-63, and Asn-155.

This sequence belongs to the acetylglutamate kinase family. ArgB subfamily.

The protein resides in the cytoplasm. It carries out the reaction N-acetyl-L-glutamate + ATP = N-acetyl-L-glutamyl 5-phosphate + ADP. It participates in amino-acid biosynthesis; L-arginine biosynthesis; N(2)-acetyl-L-ornithine from L-glutamate: step 2/4. Its function is as follows. Catalyzes the ATP-dependent phosphorylation of N-acetyl-L-glutamate. This chain is Acetylglutamate kinase, found in Lactiplantibacillus plantarum (strain ATCC BAA-793 / NCIMB 8826 / WCFS1) (Lactobacillus plantarum).